The sequence spans 480 residues: Aspartyl/glutamyl-tRNA(Asn/Gln) amidotransferase subunit B (480 aa).

Belongs to the GatB/GatE family. GatB subfamily. Heterotrimer of A, B and C subunits.

The enzyme catalyses L-glutamyl-tRNA(Gln) + L-glutamine + ATP + H2O = L-glutaminyl-tRNA(Gln) + L-glutamate + ADP + phosphate + H(+). It carries out the reaction L-aspartyl-tRNA(Asn) + L-glutamine + ATP + H2O = L-asparaginyl-tRNA(Asn) + L-glutamate + ADP + phosphate + 2 H(+). Functionally, allows the formation of correctly charged Asn-tRNA(Asn) or Gln-tRNA(Gln) through the transamidation of misacylated Asp-tRNA(Asn) or Glu-tRNA(Gln) in organisms which lack either or both of asparaginyl-tRNA or glutaminyl-tRNA synthetases. The reaction takes place in the presence of glutamine and ATP through an activated phospho-Asp-tRNA(Asn) or phospho-Glu-tRNA(Gln). The chain is Aspartyl/glutamyl-tRNA(Asn/Gln) amidotransferase subunit B from Streptococcus pneumoniae (strain ATCC 700669 / Spain 23F-1).